Reading from the N-terminus, the 238-residue chain is MASSPKLFSMSILFLFALFSMQIHAREYFSKFPRVNINEKETTTREQKHETFVPQTTQKPEEQEPRFIPETQNGYGLYGHESGSSRPSFTTKETYEPYVTPVRFHPDEPYNSIPESSNNKDTYYYNKNAYESTKQQNLGEAIFTEKGWSTKENQNNNYYNGNNGYNNGEKQGMSDTRYLENGKYYYDVKSENNYYPNRFDNSRGVASRNEFNENRYNNMGRYHQNQEEFEESEEEFEP.

Over residues 40–51 the composition is skewed to basic and acidic residues; the sequence is KETTTREQKHET. Disordered regions lie at residues 40–64 and 210–238; these read KETTTREQKHETFVPQTTQKPEEQE and EFNENRYNNMGRYHQNQEEFEESEEEFEP. The segment covering 227-238 has biased composition (acidic residues); that stretch reads EEFEESEEEFEP.

It is predominantly expressed in fiber cells.

It is found in the secreted. The protein resides in the cell wall. This chain is Protein E6 (E6), found in Gossypium hirsutum (Upland cotton).